The sequence spans 150 residues: Cytochrome c oxidase subunit 5A, mitochondrial (150 aa).

Residues 1-41 constitute a mitochondrion transit peptide; sequence MLGAALRRCAVAATTRADPRGLLHSARTPGPAVAIQSVRCY. The SIFI-degron signature appears at 2-17; sequence LGAALRRCAVAATTRA. An N6-acetyllysine mark is found at K87 and K113. Phosphothreonine is present on T141.

The protein belongs to the cytochrome c oxidase subunit 5A family. As to quaternary structure, component of the cytochrome c oxidase (complex IV, CIV), a multisubunit enzyme composed of 14 subunits. The complex is composed of a catalytic core of 3 subunits MT-CO1, MT-CO2 and MT-CO3, encoded in the mitochondrial DNA, and 11 supernumerary subunits COX4I1 (or COX4I2), COX5A, COX5B, COX6A1 (or COX6A2), COX6B1 (or COX6B2), COX6C, COX7A2 (or COX7A1), COX7B, COX7C, COX8A and NDUFA4, which are encoded in the nuclear genome. The complex exists as a monomer or a dimer and forms supercomplexes (SCs) in the inner mitochondrial membrane with NADH-ubiquinone oxidoreductase (complex I, CI) and ubiquinol-cytochrome c oxidoreductase (cytochrome b-c1 complex, complex III, CIII), resulting in different assemblies (supercomplex SCI(1)III(2)IV(1) and megacomplex MCI(2)III(2)IV(2)). Interacts with AFG1L. Interacts with RAB5IF. In response to mitochondrial stress, the precursor protein is ubiquitinated by the SIFI complex in the cytoplasm before mitochondrial import, leading to its degradation. Within the SIFI complex, UBR4 initiates ubiquitin chain that are further elongated or branched by KCMF1.

Its subcellular location is the mitochondrion inner membrane. Its pathway is energy metabolism; oxidative phosphorylation. Its function is as follows. Component of the cytochrome c oxidase, the last enzyme in the mitochondrial electron transport chain which drives oxidative phosphorylation. The respiratory chain contains 3 multisubunit complexes succinate dehydrogenase (complex II, CII), ubiquinol-cytochrome c oxidoreductase (cytochrome b-c1 complex, complex III, CIII) and cytochrome c oxidase (complex IV, CIV), that cooperate to transfer electrons derived from NADH and succinate to molecular oxygen, creating an electrochemical gradient over the inner membrane that drives transmembrane transport and the ATP synthase. Cytochrome c oxidase is the component of the respiratory chain that catalyzes the reduction of oxygen to water. Electrons originating from reduced cytochrome c in the intermembrane space (IMS) are transferred via the dinuclear copper A center (CU(A)) of subunit 2 and heme A of subunit 1 to the active site in subunit 1, a binuclear center (BNC) formed by heme A3 and copper B (CU(B)). The BNC reduces molecular oxygen to 2 water molecules using 4 electrons from cytochrome c in the IMS and 4 protons from the mitochondrial matrix. This Homo sapiens (Human) protein is Cytochrome c oxidase subunit 5A, mitochondrial (COX5A).